Reading from the N-terminus, the 446-residue chain is MHTLLAFIFAILILVSLHEFGHYIVARLCGVKVVRFSVGFGKPFFTRKRGDTEWCLAPIPLGGYVKMVDTREGEVSEADLPYAFDKQHPAKRIAIVAAGPLTNLALAVLLYGLSFSFGVTELRPYVGTVEPDTIAARAGFQSGDKIQSVNGTPVADWGSAQTEIVLNLEAGKVAVGVQTASGAQTVRTIDAAGTPEAGKIAKNQGYIGLMPFKITTVAGGVEKGSPAEKAGLKPGDRLTAADGKPIASWQEWANLTRQSPGKKITLTYERAGQTHTADIRPDTVEQPDHTLIGRVGLRPQPDRAWDAQIRRSYRPSVVRAFGMGWEKTVSHSWTTLKFFGKLISGNASVSHISGPLTIADIAGQSAELGLQSYLEFLALVSISLGVLNLLPVPVLDGGHLVFYTAEWIRGKPLGERVQNIGLRFGLALMMLMMAVAFFNDVTRLLG.

Residue His-18 coordinates Zn(2+). The active site involves Glu-19. His-22 is a Zn(2+) binding site. Transmembrane regions (helical) follow at residues Ile-93–Phe-115, Phe-376–Gly-398, and Asn-419–Phe-438. In terms of domain architecture, PDZ spans Pro-100–Ser-181.

It belongs to the peptidase M50B family. It depends on Zn(2+) as a cofactor.

The protein resides in the cell inner membrane. The chain is Putative zinc metalloprotease NMA0084 from Neisseria meningitidis serogroup A / serotype 4A (strain DSM 15465 / Z2491).